The following is a 191-amino-acid chain: MGVTNPDKVISNTPGVVDPATSVPAWQDDAFFRQATDQLADKGFVLTTVDDLINWSRTGSLMWMTFGLACCAVEMMQTSMPRYDAERFGVAPRASPRQSDVMIVAGTLTNKMAPALRKVYDQMPEPRYVISMGSCANGGGYYHYSYSVVRGCDRIVPVDIYVPGCPPTAEALLYGILALQKKIRRTGTLDR.

[4Fe-4S] cluster contacts are provided by Cys-70, Cys-71, Cys-135, and Cys-165.

This sequence belongs to the complex I 20 kDa subunit family. As to quaternary structure, NDH-1 is composed of 14 different subunits. Subunits NuoB, C, D, E, F, and G constitute the peripheral sector of the complex. The cofactor is [4Fe-4S] cluster.

The protein resides in the cell inner membrane. The enzyme catalyses a quinone + NADH + 5 H(+)(in) = a quinol + NAD(+) + 4 H(+)(out). In terms of biological role, NDH-1 shuttles electrons from NADH, via FMN and iron-sulfur (Fe-S) centers, to quinones in the respiratory chain. The immediate electron acceptor for the enzyme in this species is believed to be ubiquinone. Couples the redox reaction to proton translocation (for every two electrons transferred, four hydrogen ions are translocated across the cytoplasmic membrane), and thus conserves the redox energy in a proton gradient. The chain is NADH-quinone oxidoreductase subunit B from Parvibaculum lavamentivorans (strain DS-1 / DSM 13023 / NCIMB 13966).